A 253-amino-acid chain; its full sequence is Ubiquinone/menaquinone biosynthesis C-methyltransferase UbiE (253 aa).

S-adenosyl-L-methionine-binding positions include Thr76, Asp97, and 125–126 (NA).

The protein belongs to the class I-like SAM-binding methyltransferase superfamily. MenG/UbiE family.

The catalysed reaction is a 2-demethylmenaquinol + S-adenosyl-L-methionine = a menaquinol + S-adenosyl-L-homocysteine + H(+). It catalyses the reaction a 2-methoxy-6-(all-trans-polyprenyl)benzene-1,4-diol + S-adenosyl-L-methionine = a 5-methoxy-2-methyl-3-(all-trans-polyprenyl)benzene-1,4-diol + S-adenosyl-L-homocysteine + H(+). The protein operates within quinol/quinone metabolism; menaquinone biosynthesis; menaquinol from 1,4-dihydroxy-2-naphthoate: step 2/2. Its pathway is cofactor biosynthesis; ubiquinone biosynthesis. Functionally, methyltransferase required for the conversion of demethylmenaquinol (DMKH2) to menaquinol (MKH2) and the conversion of 2-polyprenyl-6-methoxy-1,4-benzoquinol (DDMQH2) to 2-polyprenyl-3-methyl-6-methoxy-1,4-benzoquinol (DMQH2). In Bradyrhizobium sp. (strain BTAi1 / ATCC BAA-1182), this protein is Ubiquinone/menaquinone biosynthesis C-methyltransferase UbiE.